Here is a 111-residue protein sequence, read N- to C-terminus: Repressed By RIM101 protein 1 (111 aa).

The N-terminal stretch at 1–19 (MKFSTTLLALTASIAAVMS) is a signal peptide. The interval 71–90 (SGASSATGGSSAAKSGSSSG) is disordered. Residue Ser81 is the site of GPI-anchor amidated serine attachment. The propeptide at 82–111 (AAKSGSSSGAGFAPVAGAGSLAAIAGLLLL) is removed in mature form.

The GPI-anchor is attached to the protein in the endoplasmic reticulum and serves to target the protein to the cell surface. There, the glucosamine-inositol phospholipid moiety is cleaved off and the GPI-modified mannoprotein is covalently attached via its lipidless GPI glycan remnant to the 1,6-beta-glucan of the outer cell wall layer.

Its subcellular location is the secreted. It localises to the cell wall. The protein localises to the membrane. In terms of biological role, probable cell wall protein required for filamentation at low pH. This Candida albicans (strain SC5314 / ATCC MYA-2876) (Yeast) protein is Repressed By RIM101 protein 1 (RBR1).